A 249-amino-acid polypeptide reads, in one-letter code: MRRKIIAANWKMYKTCAETESFIKEFIELSKGYEEKEIVICPPFTSLYVASKLLKDTAIKLGAQNMFWEKEGAYTGEISPIMLKDLNCTYVIIGHSERRNYFSETNEMINKKIKSAFNYGLIPIFCVGEKWEERERGKTEEVITKQVREGLEGLEKENVEKIVIAYEPVWAIGTGHSAKGEDANEVAGLIRKIISEMYDTEVSQKIRIQYGGSVNPQNITEFLSQNEIDGALVGGASLKPQSFWNIVKS.

Residue 9 to 11 (NWK) coordinates substrate. The active-site Electrophile is the H95. E167 (proton acceptor) is an active-site residue. Substrate-binding positions include G173, S213, and 234-235 (GG).

The protein belongs to the triosephosphate isomerase family. As to quaternary structure, homodimer.

Its subcellular location is the cytoplasm. The catalysed reaction is D-glyceraldehyde 3-phosphate = dihydroxyacetone phosphate. The protein operates within carbohydrate biosynthesis; gluconeogenesis. It functions in the pathway carbohydrate degradation; glycolysis; D-glyceraldehyde 3-phosphate from glycerone phosphate: step 1/1. Functionally, involved in the gluconeogenesis. Catalyzes stereospecifically the conversion of dihydroxyacetone phosphate (DHAP) to D-glyceraldehyde-3-phosphate (G3P). This is Triosephosphate isomerase from Dictyoglomus thermophilum (strain ATCC 35947 / DSM 3960 / H-6-12).